A 651-amino-acid polypeptide reads, in one-letter code: A-type voltage-gated potassium channel KCND1 (651 aa).

Topologically, residues 1–183 (MAAGVATWLP…RAFENPHTST (183 aa)) are cytoplasmic. The tract at residues 2–20 (AAGVATWLPFARAAAVGWL) is interaction with KCNIP1, KCNIP2, and other family members. Histidine 104, cysteine 131, and cysteine 132 together coordinate Zn(2+). The disordered stretch occupies residues 144–164 (AERLAEDEEAEQAGEGPALPA). Residues 184–205 (AALVFYYVTGFFIAVSVIANVV) form a helical membrane-spanning segment. The Extracellular segment spans residues 206–230 (ETIPCRGTPRWPSKEQSCGDRFPTA). A helical membrane pass occupies residues 231 to 252 (FFCMDTACVLIFTGEYLLRLFA). Residues 253–263 (APSRCRFLRSV) lie on the Cytoplasmic side of the membrane. Residues 264–284 (MSLIDVVAILPYYIGLFVPKN) traverse the membrane as a helical segment. The Extracellular portion of the chain corresponds to 285–287 (DDV). Residues 288 to 308 (SGAFVTLRVFRVFRIFKFSRH) form a helical; Voltage-sensor membrane-spanning segment. Over 309–323 (SQGLRILGYTLKSCA) the chain is Cytoplasmic. Residues 310–323 (QGLRILGYTLKSCA) are S4-S5 linker. A helical membrane pass occupies residues 324–345 (SELGFLLFSLTMAIIIFATVMF). The Extracellular segment spans residues 346 to 359 (YAEKGTSKTNFTSI). N-linked (GlcNAc...) asparagine glycosylation occurs at asparagine 355. The segment at residues 360–371 (PAAFWYTIVTMT) is an intramembrane region (helical). The Selectivity filter motif lies at 372-377 (TLGYGD). An intramembrane segment occupies 372–379 (TLGYGDMV). Residues 380–386 (PSTIAGK) are Extracellular-facing. The chain crosses the membrane as a helical span at residues 387–415 (IFGSICSLSGVLVIALPVPVIVSNFSRIY). The Cytoplasmic segment spans residues 416 to 651 (HQNQRADKRR…LPETVKISSL (236 aa)). The residue at position 458 (serine 458) is a Phosphoserine. The segment at 474–489 (FEQQHHHLLHCLEKTT) is required for dendritic targeting. Phosphoserine is present on serine 555. Disordered regions lie at residues 566 to 585 (RRSPAPQTRSSLNAKPHDSL) and 601 to 651 (IPTP…ISSL). The segment covering 626 to 637 (TPNTTLRNSSLG) has biased composition (polar residues).

It belongs to the potassium channel family. D (Shal) (TC 1.A.1.2) subfamily. Kv4.1/KCND1 sub-subfamily. In terms of assembly, component of heteromultimeric potassium channels. Identified in potassium channel complexes containing KCND1, KCND2, KCND3, KCNIP1, KCNIP2, KCNIP3, KCNIP4, DPP6 and DPP10.

Its subcellular location is the cell membrane. It carries out the reaction K(+)(in) = K(+)(out). A-type voltage-gated potassium channel that mediates transmembrane potassium transport in excitable membranes in the brain. Mediates A-type current I(SA) in suprachiasmatic nucleus (SCN) neurons. Exhibits a low-threshold A-type current with a hyperpolarized steady-state inactivation midpoint and the recovery process was steeply voltage-dependent, with recovery being markedly faster at more negative potentials. May regulates repetitive firing rates in the suprachiasmatic nucleus (SCN) neurons and circadian rhythms in neuronal excitability and behavior. Contributes to the regulation of the circadian rhythm of action potential firing in suprachiasmatic nucleus neurons, which regulates the circadian rhythm of locomotor activity. The regulatory subunit KCNIP1 modulates the kinetics of channel inactivation, increases the current amplitudes and accelerates recovery from inactivation, shifts activation in a depolarizing direction. The regulatory subunit DPP10 decreases the voltage sensitivity of the inactivation channel gating. This chain is A-type voltage-gated potassium channel KCND1, found in Mus musculus (Mouse).